Here is a 685-residue protein sequence, read N- to C-terminus: Dammaradiene synthase (685 aa).

PFTB repeat units follow at residues Met-82–Asn-123 and Ile-265–Val-308. Asp-400 serves as the catalytic Proton donor. 2 PFTB repeats span residues Ile-424–Val-465 and Ile-621–Arg-672.

Belongs to the terpene cyclase/mutase family.

It catalyses the reaction squalene = dammara-20,24-diene. Its function is as follows. Squalene cyclase producing the tetracyclic triterpene dammaradiene. This Dryopteris crassirhizoma (Thick stemmed wood fern) protein is Dammaradiene synthase (DCD).